A 558-amino-acid chain; its full sequence is Inositol-3-phosphate synthase (558 aa).

A disordered region spans residues 1–34; the sequence is MSPTALDACDHHDSFSLPAQDQSKVHPSARRTPE. NAD(+)-binding residues include glycine 99, glycine 100, asparagine 101, asparagine 102, aspartate 174, serine 210, isoleucine 211, glutamine 221, arginine 224, threonine 262, alanine 263, asparagine 264, threonine 265, glycine 313, serine 314, aspartate 338, serine 341, asparagine 372, asparagine 373, aspartate 374, lysine 387, glycine 439, aspartate 440, aspartate 468, and serine 469.

The protein belongs to the myo-inositol 1-phosphate synthase family. In terms of assembly, homotetramer. The cofactor is NAD(+).

It is found in the cytoplasm. It catalyses the reaction D-glucose 6-phosphate = 1D-myo-inositol 3-phosphate. It functions in the pathway polyol metabolism; myo-inositol biosynthesis; myo-inositol from D-glucose 6-phosphate: step 1/2. Its function is as follows. Key enzyme in myo-inositol biosynthesis pathway that catalyzes the conversion of glucose 6-phosphate to 1-myo-inositol 1-phosphate in a NAD-dependent manner. Rate-limiting enzyme in the synthesis of all inositol-containing compounds. The chain is Inositol-3-phosphate synthase from Cryptococcus neoformans var. grubii serotype A (strain H99 / ATCC 208821 / CBS 10515 / FGSC 9487) (Filobasidiella neoformans var. grubii).